Consider the following 1193-residue polypeptide: DNA polymerase (1193 aa).

The interval 1–88 (MALVQTHGSR…PAKKKRGTVV (88 aa)) is disordered. Low complexity predominate over residues 48–68 (PATTASGSRAAPTARRASSPP).

The protein belongs to the DNA polymerase type-B family. In terms of assembly, heterodimer with the terminal protein; this heterodimer binds to bp 9 to 18 of the genome. Forms a complex with viral pTP, DBP and hosts NFIA and POU2F1/OCT1 for initiation of replication.

It is found in the host nucleus. It catalyses the reaction DNA(n) + a 2'-deoxyribonucleoside 5'-triphosphate = DNA(n+1) + diphosphate. Functionally, eukaryotic-type DNA polymerase involved in viral genomic replication. DNA synthesis is protein primed, and acts in a strand displacement replication. Assembles in complex with viral pTP, DBP, host NFIA and host POU2F1/OCT1 on viral origin of replication. The polymerase covalently transfers dCMP onto pTP, thereby initiating complementary strand synthesis. The protein is DNA polymerase of Homo sapiens (Human).